The following is a 515-amino-acid chain: Cytidine and dCMP deaminase domain-containing protein 1 (515 aa).

2 stretches are compositionally biased toward polar residues: residues 1–11 and 18–27; these read MKEAGQMQNLE and SVSTQTGSMT. Disordered regions lie at residues 1–27 and 56–83; these read MKEAGQMQNLESARAGRSVSTQTGSMT and RQKSQKNEEGKHGPLGDNEEMTRVSTDK. Basic and acidic residues predominate over residues 60-83; sequence QKNEEGKHGPLGDNEEMTRVSTDK. Residues 71-169 form the CMP/dCMP-type deaminase 1 domain; sequence GDNEEMTRVS…SLLTEASSSE (99 aa). Zn(2+) contacts are provided by His110, Cys135, and Cys138. Positions 272 to 284 match the Nuclear export signal motif; it reads NLRQNMKDLILLL. A CMP/dCMP-type deaminase 2 domain is found at 318–483; the sequence is EIARHCMVQA…LNPSGAYGLE (166 aa). His399 is a binding site for Zn(2+). Glu401 serves as the catalytic Proton donor. Zn(2+) contacts are provided by Cys427 and Cys430. The Bipartite nuclear localization signal motif lies at 489-511; that stretch reads RRENGVLRPVPQKEEQHQDKKLC. Residues 494–515 are disordered; the sequence is VLRPVPQKEEQHQDKKLCLGIH.

It belongs to the cytidine and deoxycytidylate deaminase family. Zn(2+) is required as a cofactor.

Its subcellular location is the cytoplasm. It is found in the nucleus. The catalysed reaction is 2'-deoxycytidine + H2O + H(+) = 2'-deoxyuridine + NH4(+). It catalyses the reaction cytidine + H2O + H(+) = uridine + NH4(+). In terms of biological role, catalyzes the deamination of cytidine and deoxycytidine into uridine and deoxyuridine, respectively. May play an important role in testicular development and spermatogenesis. This Pongo abelii (Sumatran orangutan) protein is Cytidine and dCMP deaminase domain-containing protein 1 (CDADC1).